The primary structure comprises 550 residues: Acidic amino acid decarboxylase GADL1 (550 aa).

Lys362 carries the post-translational modification N6-(pyridoxal phosphate)lysine.

This sequence belongs to the group II decarboxylase family. As to quaternary structure, homodimer. The cofactor is pyridoxal 5'-phosphate. In terms of tissue distribution, expressed in skeletal muscles and kidney (at protein level). Expressed in skeletal muscle and weakly in brain. Not expressed in liver or kidney. Expressed in brain, olfactory bulb, liver, muscle and kidney with the highest expression in olfactory bulb and almost not detected in liver (at protein level).

It catalyses the reaction L-aspartate + H(+) = beta-alanine + CO2. The enzyme catalyses 3-sulfino-L-alanine + H(+) = hypotaurine + CO2. The catalysed reaction is L-cysteate + H(+) = taurine + CO2. With respect to regulation, activated weakly by 0.2-0.4 mM Li(+). Inhibited by bis-carboxymethyl-trithiocarbonate, ethylxanthogenacetic acid and 2,5-disulfoaniline. Catalyzes the decarboxylation of L-aspartate, 3-sulfino-L-alanine (cysteine sulfinic acid), and L-cysteate to beta-alanine, hypotaurine and taurine, respectively. The preferred substrate is L-aspartate. Does not exhibit any decarboxylation activity toward glutamate. The sequence is that of Acidic amino acid decarboxylase GADL1 from Mus musculus (Mouse).